Reading from the N-terminus, the 241-residue chain is 2-C-methyl-D-erythritol 4-phosphate cytidylyltransferase (241 aa).

It belongs to the IspD/TarI cytidylyltransferase family. IspD subfamily. In terms of assembly, homodimer.

The enzyme catalyses 2-C-methyl-D-erythritol 4-phosphate + CTP + H(+) = 4-CDP-2-C-methyl-D-erythritol + diphosphate. The protein operates within isoprenoid biosynthesis; isopentenyl diphosphate biosynthesis via DXP pathway; isopentenyl diphosphate from 1-deoxy-D-xylulose 5-phosphate: step 2/6. Catalyzes the formation of 4-diphosphocytidyl-2-C-methyl-D-erythritol from CTP and 2-C-methyl-D-erythritol 4-phosphate (MEP). The chain is 2-C-methyl-D-erythritol 4-phosphate cytidylyltransferase from Yersinia pseudotuberculosis serotype IB (strain PB1/+).